A 427-amino-acid polypeptide reads, in one-letter code: Glutamate-1-semialdehyde 2,1-aminomutase (427 aa).

K269 is subject to N6-(pyridoxal phosphate)lysine.

Belongs to the class-III pyridoxal-phosphate-dependent aminotransferase family. HemL subfamily. In terms of assembly, homodimer. It depends on pyridoxal 5'-phosphate as a cofactor.

It localises to the cytoplasm. The catalysed reaction is (S)-4-amino-5-oxopentanoate = 5-aminolevulinate. It participates in porphyrin-containing compound metabolism; protoporphyrin-IX biosynthesis; 5-aminolevulinate from L-glutamyl-tRNA(Glu): step 2/2. This Thermus thermophilus (strain ATCC BAA-163 / DSM 7039 / HB27) protein is Glutamate-1-semialdehyde 2,1-aminomutase.